Here is a 452-residue protein sequence, read N- to C-terminus: Nuclear distribution protein nudF 2 (452 aa).

The stretch at 76–101 (ALQILDLESKVAGLQAELSSLTLTSR) forms a coiled coil. WD repeat units lie at residues 123 to 164 (SHRD…RTLK), 166 to 206 (HIRA…ANIR), 210 to 250 (GHDH…CVKV), 253 to 292 (SSDA…QKSA), 295 to 355 (GHEN…IKTL), 357 to 396 (GHDN…KLVK), and 401 to 449 (AHSH…SCVR).

It belongs to the WD repeat LIS1/nudF family. In terms of assembly, self-associates. Interacts with nudE and dynein.

It localises to the cytoplasm. Its subcellular location is the cytoskeleton. It is found in the spindle pole. Functionally, positively regulates the activity of the minus-end directed microtubule motor protein dynein. May enhance dynein-mediated microtubule sliding by targeting dynein to the microtubule plus end. Required for nuclear migration during vegetative growth as well as development. Required for retrograde early endosome (EE) transport from the hyphal tip. Required for localization of dynein to the mitotic spindle poles. Recruits additional proteins to the dynein complex at SPBs. In Talaromyces marneffei (strain ATCC 18224 / CBS 334.59 / QM 7333) (Penicillium marneffei), this protein is Nuclear distribution protein nudF 2.